The sequence spans 214 residues: Adenylate kinase (214 aa).

10–15 is an ATP binding site; sequence GAGKGT. The interval 30–59 is NMP; it reads STGDMLRAAVKAGSELGKQAKAIMDAGKLV. Residues Thr-31, Arg-36, 57–59, 85–88, and Gln-92 each bind AMP; these read KLV and GFPR. The tract at residues 122–159 is LID; it reads GRRVHPGSGRVYHVKFNPPQVEGKDDVTGEDLMTRKDD. ATP-binding positions include Arg-123 and 132–133; that span reads VY. Arg-156 and Arg-167 together coordinate AMP. Gln-200 contacts ATP.

It belongs to the adenylate kinase family. As to quaternary structure, monomer.

The protein localises to the cytoplasm. It catalyses the reaction AMP + ATP = 2 ADP. It functions in the pathway purine metabolism; AMP biosynthesis via salvage pathway; AMP from ADP: step 1/1. Catalyzes the reversible transfer of the terminal phosphate group between ATP and AMP. Plays an important role in cellular energy homeostasis and in adenine nucleotide metabolism. The sequence is that of Adenylate kinase from Edwardsiella ictaluri (strain 93-146).